Consider the following 180-residue polypeptide: MSRIGRLPIKIPDAVKVDVKDNLVIVEGIRGRLVQDIKDSINVKVENGSVIVDRVLNDKKAKAYHGLYRSLIFNMVKGVTEGFSKSLTINGIGYRVEQQGNSLFLSLGYSTQFEYVIPDGISVKLDGNTKISVEGIDKFKVGQVAAEIRSLKKPEPYKGKGIKYDNEVIRRKVGKSGVKK.

It belongs to the universal ribosomal protein uL6 family. As to quaternary structure, part of the 50S ribosomal subunit.

Functionally, this protein binds to the 23S rRNA, and is important in its secondary structure. It is located near the subunit interface in the base of the L7/L12 stalk, and near the tRNA binding site of the peptidyltransferase center. This is Large ribosomal subunit protein uL6 from Borreliella burgdorferi (strain ATCC 35210 / DSM 4680 / CIP 102532 / B31) (Borrelia burgdorferi).